Consider the following 267-residue polypeptide: Glutamate 5-kinase (267 aa).

Residue lysine 17 coordinates ATP. Positions 57, 144, and 156 each coordinate substrate. Residues 176–177 and 218–224 each bind ATP; these read SD and TGGMATK.

This sequence belongs to the glutamate 5-kinase family.

The protein resides in the cytoplasm. The enzyme catalyses L-glutamate + ATP = L-glutamyl 5-phosphate + ADP. It participates in amino-acid biosynthesis; L-proline biosynthesis; L-glutamate 5-semialdehyde from L-glutamate: step 1/2. Catalyzes the transfer of a phosphate group to glutamate to form L-glutamate 5-phosphate. This is Glutamate 5-kinase from Clostridium acetobutylicum (strain ATCC 824 / DSM 792 / JCM 1419 / IAM 19013 / LMG 5710 / NBRC 13948 / NRRL B-527 / VKM B-1787 / 2291 / W).